A 590-amino-acid polypeptide reads, in one-letter code: Dystrobrevin-1 (590 aa).

Residues 1–10 (MLWSNGGGGP) are compositionally biased toward gly residues. The interval 1 to 25 (MLWSNGGGGPREPSSAPSPDHHRAM) is disordered. A ZZ-type zinc finger spans residues 259-315 (YHPVVCDACQVRSFTGFRYKCQRCANYQLCQSCFWRGRTSQNHSNEHEMKEYSSYKS). 8 residues coordinate Zn(2+): cysteine 264, cysteine 267, cysteine 279, cysteine 282, cysteine 288, cysteine 291, histidine 301, and histidine 305. Residues 434–508 (SMVGDERTLI…EHLMAQLNTG (75 aa)) adopt a coiled-coil conformation. Positions 468–590 (DGLAGLRDRK…DENGVTINGF (123 aa)) are essential for interaction with ctn-1. The tract at residues 484 to 490 (MFEMQQR) is essential for interaction with dys-1.

It belongs to the dystrophin family. Dystrobrevin subfamily. Component of the dystrophin glycoprotein complex (DGC). Interacts with dystrophin (dys-1) and syntrophin (stn-1) to form the DGC. Interacts (via C-terminus) with ctn-1 (via N-terminus); the interaction is required for localization of the dystrophin complex and ctn-1 near dense bodies in muscle cells. From late embryogenesis to adulthood, expressed in neurons and muscles; particularly strong in the ventral nerve cord and in muscles of the body wall, head pharyngeal, and vulva; weaker in the intestinal muscle (at protein level).

It localises to the cytoplasm. Plays a role in cholinergic transmission and as a functional partner of dystrophin (dys-1), necessary for muscle maintenance. Required for localization of ctn-1 near dense bodies in muscle cells. In Caenorhabditis elegans, this protein is Dystrobrevin-1.